The following is a 208-amino-acid chain: 3-demethoxyubiquinol 3-hydroxylase (208 aa).

The Fe cation site is built by E57, E87, H90, E139, E171, and H174.

This sequence belongs to the COQ7 family. It depends on Fe cation as a cofactor.

It is found in the cell membrane. The enzyme catalyses a 5-methoxy-2-methyl-3-(all-trans-polyprenyl)benzene-1,4-diol + AH2 + O2 = a 3-demethylubiquinol + A + H2O. The protein operates within cofactor biosynthesis; ubiquinone biosynthesis. Functionally, catalyzes the hydroxylation of 2-nonaprenyl-3-methyl-6-methoxy-1,4-benzoquinol during ubiquinone biosynthesis. In Burkholderia pseudomallei (strain 668), this protein is 3-demethoxyubiquinol 3-hydroxylase.